A 388-amino-acid chain; its full sequence is Succinate--CoA ligase [ADP-forming] subunit beta (388 aa).

An ATP-grasp domain is found at 9-244; sequence KQLFREYGLP…TTQDDEREMH (236 aa). Residues K46, 53 to 55, E99, S102, and E107 contribute to the ATP site; that span reads GRG. 2 residues coordinate Mg(2+): N199 and D213. Residues N264 and 321-323 contribute to the substrate site; that span reads GIV.

This sequence belongs to the succinate/malate CoA ligase beta subunit family. Heterotetramer of two alpha and two beta subunits. Mg(2+) is required as a cofactor.

The catalysed reaction is succinate + ATP + CoA = succinyl-CoA + ADP + phosphate. It carries out the reaction GTP + succinate + CoA = succinyl-CoA + GDP + phosphate. Its pathway is carbohydrate metabolism; tricarboxylic acid cycle; succinate from succinyl-CoA (ligase route): step 1/1. Functionally, succinyl-CoA synthetase functions in the citric acid cycle (TCA), coupling the hydrolysis of succinyl-CoA to the synthesis of either ATP or GTP and thus represents the only step of substrate-level phosphorylation in the TCA. The beta subunit provides nucleotide specificity of the enzyme and binds the substrate succinate, while the binding sites for coenzyme A and phosphate are found in the alpha subunit. This Psychromonas ingrahamii (strain DSM 17664 / CCUG 51855 / 37) protein is Succinate--CoA ligase [ADP-forming] subunit beta.